Consider the following 180-residue polypeptide: MQALPTILPPPPLPDDSEAPARTPEKHANLVRFQSELEFIQCLAHPQYLHELHIQGYLGKPAFLNYLKYLEYWREPQYVRFIIYPTCLVYLTLLQTELFRSRLGDMGFITELMRVGSRHHATWRVGKPAEDKQSEEKPAVSMAPLDDDEEEDEPERGQETKGKRKKKKSRSGNVGAGQAL.

2 disordered regions span residues 1–24 and 123–180; these read MQAL…ARTP and WRVG…GQAL. The span at 127 to 138 shows a compositional bias: basic and acidic residues; the sequence is KPAEDKQSEEKP. Residues 145-154 show a composition bias toward acidic residues; sequence LDDDEEEDEP.

This sequence belongs to the Mediator complex subunit 31 family. As to quaternary structure, component of the Mediator complex.

Its subcellular location is the nucleus. Functionally, component of the Mediator complex, a coactivator involved in the regulated transcription of nearly all RNA polymerase II-dependent genes. Mediator functions as a bridge to convey information from gene-specific regulatory proteins to the basal RNA polymerase II transcription machinery. Mediator is recruited to promoters by direct interactions with regulatory proteins and serves as a scaffold for the assembly of a functional preinitiation complex with RNA polymerase II and the general transcription factors. The polypeptide is Mediator of RNA polymerase II transcription subunit 31 (SOH1) (Cryptococcus neoformans var. neoformans serotype D (strain B-3501A) (Filobasidiella neoformans)).